Reading from the N-terminus, the 543-residue chain is ADP,ATP carrier protein 3 (543 aa).

10 helical membrane-spanning segments follow: residues 46–66, 86–106, 111–131, 175–195, 209–229, 243–263, 306–326, 346–366, 382–402, and 504–524; these read VLYL…MGNL, IFLP…LSLF, MFDI…LVVW, FLFL…FNIF, ISVY…LTLV, ELGF…ILAL, LLIA…LVEA, FANF…LVVI, LASL…LIAF, and SVSG…LKYL.

Belongs to the ADP/ATP translocase tlc family.

It localises to the mitosome membrane. Functionally, ATP transporter involved in the uptake of ATP from the parasite cell cytoplasm into the mitosome matrix. Equilibrates nucleotide pools across a concentration gradient between both sides of the mitosome membrane. This chain is ADP,ATP carrier protein 3 (NTT3), found in Encephalitozoon cuniculi (strain GB-M1) (Microsporidian parasite).